Here is a 62-residue protein sequence, read N- to C-terminus: uncharacterized protein (62 aa).

2 consecutive transmembrane segments (helical) span residues 7 to 27 and 34 to 51; these read LLLLFAFAAVFSIMLIGVFIA and IIASIVLVCAVMGGGFTL.

It localises to the cell membrane. This is an uncharacterized protein from Bacillus subtilis (strain 168).